Here is a 342-residue protein sequence, read N- to C-terminus: CMP-N-acetylneuraminate-beta-galactosamide-alpha-2,3-sialyltransferase 1 (342 aa).

The Cytoplasmic portion of the chain corresponds to 1 to 10; it reads MVTVRKRNVK. A helical; Signal-anchor for type II membrane protein membrane pass occupies residues 11-28; that stretch reads VFTFAFVLITVTSFLLNY. Residues 29 to 342 are Lumenal-facing; the sequence is KHQVTMTTWD…IEKIKFFKGR (314 aa). Intrachain disulfides connect C61–C66, C63–C141, and C144–C283. A glycan (N-linked (GlcNAc...) asparagine) is linked at N81. Q107 is a substrate binding site. N-linked (GlcNAc...) asparagine glycosylation occurs at N116. Residues N149 and N172 each coordinate substrate. 2 N-linked (GlcNAc...) asparagine glycosylation sites follow: N203 and N229. Substrate contacts are provided by Y232, Y268, G272, G292, and H301. N306 carries N-linked (GlcNAc...) asparagine glycosylation. H318 provides a ligand contact to substrate. A glycan (N-linked (GlcNAc...) asparagine) is linked at N325.

The protein belongs to the glycosyltransferase 29 family. The soluble form derives from the membrane form by proteolytic processing.

The protein localises to the golgi apparatus. The protein resides in the golgi stack membrane. It localises to the secreted. The catalysed reaction is a beta-D-galactosyl-(1-&gt;3)-N-acetyl-alpha-D-galactosaminyl derivative + CMP-N-acetyl-beta-neuraminate = an N-acetyl-alpha-neuraminyl-(2-&gt;3)-beta-D-galactosyl-(1-&gt;3)-N-acetyl-alpha-D-galactosaminyl derivative + CMP + H(+). The protein operates within protein modification; protein glycosylation. Functionally, responsible for the synthesis of the sequence NeuAc-alpha-2,3-Gal-beta-1,3-GalNAc- found on sugar chains O-linked to Thr or Ser and also as a terminal sequence on certain gangliosides. SIAT4A and SIAT4B sialylate the same acceptor substrates but exhibit different Km values. The protein is CMP-N-acetylneuraminate-beta-galactosamide-alpha-2,3-sialyltransferase 1 (ST3GAL1) of Gallus gallus (Chicken).